We begin with the raw amino-acid sequence, 955 residues long: Thrombospondin-4 (955 aa).

The N-terminal stretch at 1-24 (MPRRKGLCLFLQMLLLHLYGVCQA) is a signal peptide. Residues 25–192 (QPNYQVFDLL…MDELKLVMGG (168 aa)) form the Laminin G-like domain. The EGF-like 1 domain occupies 281 to 320 (PKPRCDATSCFRGVRCIDTEGGFQCGPCPEGYTGNGVICT). Cystine bridges form between Cys-285–Cys-296, Cys-290–Cys-305, Cys-308–Cys-319, Cys-325–Cys-336, Cys-330–Cys-345, Cys-348–Cys-372, Cys-378–Cys-392, Cys-386–Cys-401, Cys-404–Cys-416, Cys-422–Cys-435, Cys-429–Cys-445, Cys-447–Cys-458, Cys-474–Cys-479, Cys-484–Cys-504, Cys-520–Cys-540, Cys-543–Cys-563, Cys-579–Cys-599, Cys-602–Cys-622, Cys-640–Cys-660, Cys-680–Cys-700, and Cys-716–Cys-937. In terms of domain architecture, EGF-like 2; calcium-binding spans 321 to 358 (DVDECRLNPCFLGVRCINTSPGFKCESCPPGYTGSTIQ). The EGF-like 3; calcium-binding domain occupies 374 to 415 (DTNECENGRNGGCTSNSLCINTMGSFRCGGCKPGYVGDQIKG). An EGF-like 4 domain is found at 418–459 (PEKSCRHGQNPCHASAQCSEEKDGDVTCTCSVGWAGNGYLCG). TSP type-3 repeat units follow at residues 460–492 (KDTD…NSGQ), 493–528 (EDTD…NIDQ), 529–551 (KNSD…NNDQ), 552–587 (RDTD…NVDQ), 588–610 (KDKD…NPNQ), 611–648 (SDID…NSNQ), 649–688 (LDTD…NPGQ), and 689–724 (EDDN…EITL). Asn-609 carries N-linked (GlcNAc...) asparagine glycosylation. Residues 610–678 (QSDIDNDLVG…IPDTVPPGPD (69 aa)) form a disordered region. The span at 637 to 649 (TDNCPTVINSNQL) shows a compositional bias: polar residues. The span at 657–668 (GDECDDDDDNDG) shows a compositional bias: acidic residues. A TSP C-terminal domain is found at 728–942 (RAYQTVVLDP…LKYRCNDTIP (215 aa)). Asn-938 carries N-linked (GlcNAc...) asparagine glycosylation.

Belongs to the thrombospondin family. In terms of assembly, homotrimer; disulfide-linked.

The protein resides in the endoplasmic reticulum. Its subcellular location is the sarcoplasmic reticulum. The protein localises to the secreted. It localises to the extracellular space. It is found in the extracellular matrix. In terms of biological role, adhesive glycoprotein that mediates cell-to-cell and cell-to-matrix interactions and may be involved in various processes including cellular proliferation, migration, adhesion and attachment. May play a role in ER stress response. May participate in the genesis and function of cardiac and skeletal muscle. This is Thrombospondin-4 (thbs4) from Xenopus laevis (African clawed frog).